The sequence spans 301 residues: Putative ribosomal RNA methyltransferase PB17E12.10c (301 aa).

S-adenosyl-L-methionine contacts are provided by glycine 87, tryptophan 89, aspartate 107, and aspartate 186. The active-site Proton acceptor is the lysine 247.

This sequence belongs to the class I-like SAM-binding methyltransferase superfamily. RNA methyltransferase RlmE family.

The enzyme catalyses a uridine in rRNA + S-adenosyl-L-methionine = a 2'-O-methyluridine in rRNA + S-adenosyl-L-homocysteine + H(+). In Schizosaccharomyces pombe (strain 972 / ATCC 24843) (Fission yeast), this protein is Putative ribosomal RNA methyltransferase PB17E12.10c.